A 440-amino-acid polypeptide reads, in one-letter code: Chromosome partition protein MukF (440 aa).

A leucine-zipper region spans residues 208–236; that stretch reads LSETSGTLRELQDTLEAAGDKLQANLLRI.

The protein belongs to the MukF family. In terms of assembly, interacts, and probably forms a ternary complex, with MukE and MukB via its C-terminal region. The complex formation is stimulated by calcium or magnesium. It is required for an interaction between MukE and MukB.

The protein localises to the cytoplasm. The protein resides in the nucleoid. Functionally, involved in chromosome condensation, segregation and cell cycle progression. May participate in facilitating chromosome segregation by condensation DNA from both sides of a centrally located replisome during cell division. Not required for mini-F plasmid partitioning. Probably acts via its interaction with MukB and MukE. Overexpression results in anucleate cells. It has a calcium binding activity. This Yersinia pestis protein is Chromosome partition protein MukF.